We begin with the raw amino-acid sequence, 146 residues long: ATP synthase epsilon chain 2 (146 aa).

This sequence belongs to the ATPase epsilon chain family. In terms of assembly, F-type ATPases have 2 components, CF(1) - the catalytic core - and CF(0) - the membrane proton channel. CF(1) has five subunits: alpha(3), beta(3), gamma(1), delta(1), epsilon(1). CF(0) has three main subunits: a, b and c.

It is found in the cell inner membrane. Produces ATP from ADP in the presence of a proton gradient across the membrane. The sequence is that of ATP synthase epsilon chain 2 from Cereibacter sphaeroides (strain ATCC 17023 / DSM 158 / JCM 6121 / CCUG 31486 / LMG 2827 / NBRC 12203 / NCIMB 8253 / ATH 2.4.1.) (Rhodobacter sphaeroides).